The primary structure comprises 514 residues: Voltage-gated potassium channel regulatory subunit KCNG1 (514 aa).

At 1–224 (MTLLPGDNSH…DMVERPHSGL (224 aa)) the chain is on the cytoplasmic side. Residues 180 to 196 (MEREEEEEPLDSEDQES) are compositionally biased toward acidic residues. Residues 180–205 (MEREEEEEPLDSEDQESEGPSASEGR) form a disordered region. A helical transmembrane segment spans residues 225–246 (PGKVFACLSVLFVTVTAVNLSV). Residues 247-267 (STLPSLREEEEQGQCSQMCHN) are Extracellular-facing. A helical transmembrane segment spans residues 268 to 289 (VFIVESVCVGWFSLEFLLRFIQ). Residues 290–300 (APSKFAFLRSP) lie on the Cytoplasmic side of the membrane. The chain crosses the membrane as a helical span at residues 301–321 (LTLIDLVAILPYYVTLLVDGA). At 322–338 (ASSRRKPSTGNSYLDKV) the chain is on the extracellular side. The helical; Voltage-sensor transmembrane segment at 339–359 (GLVLRVLRALRILYVMRLARH) threads the bilayer. Residues 360–374 (SLGLQTLGLTARRCT) lie on the Cytoplasmic side of the membrane. The helical transmembrane segment at 375 to 396 (REFGLLLLFLCVAIALFAPLLY) threads the bilayer. Residues 397-411 (VIENEMADSPEFTSI) lie on the Extracellular side of the membrane. The segment at residues 412 to 423 (PACYWWAVITMT) is an intramembrane region (helical). Positions 424 to 429 (TVGYGD) match the Selectivity filter motif. The stretch at 424–431 (TVGYGDMV) is an intramembrane region. The Extracellular portion of the chain corresponds to 432–438 (PRSTPGQ). A helical membrane pass occupies residues 439-467 (VVALSSILSGILLMAFPVTSIFHTFSRSY). Residues 468–514 (LELKQEQERVLIRRAQYLIKTKSQLSGMSQDSDILFGSASSDTRDNN) are Cytoplasmic-facing.

The protein belongs to the potassium channel family. G (TC 1.A.1.2) subfamily. Kv6.1/KCNG1 sub-subfamily. Heterotetramer with KCNB1 or KCNB2.

Its subcellular location is the cell membrane. Its function is as follows. Regulatory alpha-subunit of the voltage-gated potassium (Kv) channel which, when coassembled with KCNB1 or KCNB2, can modulate their expression and their gating kinetics by acting on deactivation upon repolarization and inactivation during maintained depolarization. Potassium channel subunit that does not form functional channels by itself. This chain is Voltage-gated potassium channel regulatory subunit KCNG1, found in Mus musculus (Mouse).